Reading from the N-terminus, the 190-residue chain is 3-isopropylmalate dehydratase small subunit (190 aa).

The protein belongs to the LeuD family. LeuD type 1 subfamily. Heterodimer of LeuC and LeuD.

It carries out the reaction (2R,3S)-3-isopropylmalate = (2S)-2-isopropylmalate. It participates in amino-acid biosynthesis; L-leucine biosynthesis; L-leucine from 3-methyl-2-oxobutanoate: step 2/4. Its function is as follows. Catalyzes the isomerization between 2-isopropylmalate and 3-isopropylmalate, via the formation of 2-isopropylmaleate. This chain is 3-isopropylmalate dehydratase small subunit, found in Staphylococcus aureus (strain MSSA476).